The sequence spans 193 residues: Protein SINE3 (193 aa).

Residues 15 to 35 form a disordered region; the sequence is SELGAKRLKDPEMKNRKVTTE. The span at 18–35 shows a compositional bias: basic and acidic residues; that stretch reads GAKRLKDPEMKNRKVTTE. The region spanning 155-193 is the KASH domain; sequence VTVKFRIVLLSFILWAILAAIVVFFSSGEERAYRGPLPT. The helical transmembrane segment at 161-181 threads the bilayer; it reads IVLLSFILWAILAAIVVFFSS. The Required for nuclear localization motif lies at 190–193; the sequence is PLPT.

In terms of assembly, interacts with SUN1 and SUN2.

The protein localises to the nucleus membrane. This chain is Protein SINE3, found in Arabidopsis thaliana (Mouse-ear cress).